A 503-amino-acid polypeptide reads, in one-letter code: Surface lipoprotein assembly modifier (503 aa).

The N-terminal stretch at 1-34 (MTITPVYTTFTPTKTPIKFFMAGLTFLIAHISHA) is a signal peptide. An N-terminal domain region spans residues 38–220 (RTDNQEPINQ…QYRQALKQRD (183 aa)). One copy of the TPR repeat lies at 136–169 (ILLGYANALAALDKGNAKKAIDELRRIIAIMPEY). The tract at residues 221-503 (SWTWQVGMNL…QMFVEFSRIF (283 aa)) is C-terminal probable beta barrel. The next 14 membrane-spanning stretches (beta stranded) occupy residues 222–232 (WTWQVGMNLAK), 259–270 (LSYQLGADKKWS), 275–285 (AYVGANAQIYG), 299–308 (GRLGANLGFA), 313–322 (DLSIETYGEK), 334–343 (IGIRMSVDYR), 348–358 (FQSLNAIDISR), 372–382 (TLYSTSLIYYP), 387–396 (YYLLGADFYD), 410–419 (RGIRTAWGQE), 424–434 (LSSRAQISINK), 454–463 (MQASLSLWHR), 470–479 (ITPRLTISTN), and 493–503 (NQMFVEFSRIF).

The protein belongs to the Slam family.

It is found in the cell outer membrane. In terms of biological role, required for correct export to the cell surface of some cell outer membrane lipoproteins (tested with TpbP) upon heterologous expression in E.coli and probably also in Moraxella. This chain is Surface lipoprotein assembly modifier, found in Moraxella catarrhalis (Branhamella catarrhalis).